A 251-amino-acid polypeptide reads, in one-letter code: uncharacterized protein (251 aa).

Residues 207–251 (ATPHSKRGRTKLYRKEPPGDNRSPPPWQEPHGEGLAEKLSPGPAR) form a disordered region.

This is an uncharacterized protein from Treponema pallidum (strain Nichols).